The following is a 310-amino-acid chain: HMG box-containing protein C28F2.11 (310 aa).

The span at 69–95 (ESPSKKATSPKKATPAAVAPVEATSAV) shows a compositional bias: low complexity. The tract at residues 69 to 310 (ESPSKKATSP…TTPPTAKVAN (242 aa)) is disordered. Ser-70 bears the Phosphoserine mark. Phosphothreonine is present on Thr-105. A DNA-binding region (HMG box) is located at residues 117–187 (PKRPPSAYNL…AYEEEMAAYN (71 aa)). Basic and acidic residues-rich tracts occupy residues 131–178 (QRSE…LREA) and 200–226 (VTAEETSTKPSEDLSSPTKKDLIDFSE). Phosphoserine is present on residues Ser-161, Ser-214, and Ser-215. Phosphothreonine occurs at positions 217 and 237. Residues 255–268 (STVPTSNVEPVSQP) are compositionally biased toward polar residues. Phosphoserine occurs at positions 271, 278, 294, 295, and 297. 2 positions are modified to phosphothreonine: Thr-302 and Thr-305.

The protein localises to the cytoplasm. The polypeptide is HMG box-containing protein C28F2.11 (Schizosaccharomyces pombe (strain 972 / ATCC 24843) (Fission yeast)).